We begin with the raw amino-acid sequence, 143 residues long: Auxin-responsive protein SAUR67 (143 aa).

This sequence belongs to the ARG7 family.

The protein resides in the cell membrane. In terms of biological role, may promote auxin-stimulated organ elongation, such as hypocotyls, stamen filaments and petals. This Arabidopsis thaliana (Mouse-ear cress) protein is Auxin-responsive protein SAUR67.